The primary structure comprises 247 residues: Adenosylcobinamide-GDP ribazoletransferase (247 aa).

5 helical membrane-spanning segments follow: residues 34–54 (IVMF…IFIL), 59–79 (CGIP…TGGF), 113–133 (GGLA…ELAL), 138–158 (MLAA…LLMY), and 187–207 (LAVI…AMVV).

Belongs to the CobS family. It depends on Mg(2+) as a cofactor.

It localises to the cell inner membrane. The catalysed reaction is alpha-ribazole + adenosylcob(III)inamide-GDP = adenosylcob(III)alamin + GMP + H(+). It carries out the reaction alpha-ribazole 5'-phosphate + adenosylcob(III)inamide-GDP = adenosylcob(III)alamin 5'-phosphate + GMP + H(+). Its pathway is cofactor biosynthesis; adenosylcobalamin biosynthesis; adenosylcobalamin from cob(II)yrinate a,c-diamide: step 7/7. Functionally, joins adenosylcobinamide-GDP and alpha-ribazole to generate adenosylcobalamin (Ado-cobalamin). Also synthesizes adenosylcobalamin 5'-phosphate from adenosylcobinamide-GDP and alpha-ribazole 5'-phosphate. The polypeptide is Adenosylcobinamide-GDP ribazoletransferase (Salmonella choleraesuis (strain SC-B67)).